Here is a 94-residue protein sequence, read N- to C-terminus: Small ribosomal subunit protein uS17 (94 aa).

Belongs to the universal ribosomal protein uS17 family. In terms of assembly, part of the 30S ribosomal subunit.

In terms of biological role, one of the primary rRNA binding proteins, it binds specifically to the 5'-end of 16S ribosomal RNA. This is Small ribosomal subunit protein uS17 from Symbiobacterium thermophilum (strain DSM 24528 / JCM 14929 / IAM 14863 / T).